A 463-amino-acid chain; its full sequence is Ribosomal protein uS12 methylthiotransferase RimO (463 aa).

The disordered stretch occupies residues Met-1–Arg-26. Positions Pro-8–Pro-19 are enriched in low complexity. The 111-residue stretch at Pro-30–Pro-140 folds into the MTTase N-terminal domain. 6 residues coordinate [4Fe-4S] cluster: Cys-39, Cys-75, Cys-104, Cys-171, Cys-175, and Cys-178. The Radical SAM core domain maps to Leu-157 to Ala-395. Residues Ala-398 to Leu-463 form the TRAM domain.

It belongs to the methylthiotransferase family. RimO subfamily. [4Fe-4S] cluster is required as a cofactor.

Its subcellular location is the cytoplasm. It catalyses the reaction L-aspartate(89)-[ribosomal protein uS12]-hydrogen + (sulfur carrier)-SH + AH2 + 2 S-adenosyl-L-methionine = 3-methylsulfanyl-L-aspartate(89)-[ribosomal protein uS12]-hydrogen + (sulfur carrier)-H + 5'-deoxyadenosine + L-methionine + A + S-adenosyl-L-homocysteine + 2 H(+). In terms of biological role, catalyzes the methylthiolation of an aspartic acid residue of ribosomal protein uS12. The chain is Ribosomal protein uS12 methylthiotransferase RimO from Paracoccus denitrificans (strain Pd 1222).